A 368-amino-acid polypeptide reads, in one-letter code: tRNA/tmRNA (uracil-C(5))-methyltransferase (368 aa).

S-adenosyl-L-methionine-binding residues include Gln-190, Tyr-218, Asn-223, Glu-239, and Asp-301. Cys-326 serves as the catalytic Nucleophile. Catalysis depends on Glu-360, which acts as the Proton acceptor.

The protein belongs to the class I-like SAM-binding methyltransferase superfamily. RNA M5U methyltransferase family. TrmA subfamily.

The catalysed reaction is uridine(54) in tRNA + S-adenosyl-L-methionine = 5-methyluridine(54) in tRNA + S-adenosyl-L-homocysteine + H(+). The enzyme catalyses uridine(341) in tmRNA + S-adenosyl-L-methionine = 5-methyluridine(341) in tmRNA + S-adenosyl-L-homocysteine + H(+). Dual-specificity methyltransferase that catalyzes the formation of 5-methyluridine at position 54 (m5U54) in all tRNAs, and that of position 341 (m5U341) in tmRNA (transfer-mRNA). The polypeptide is tRNA/tmRNA (uracil-C(5))-methyltransferase (Aliivibrio fischeri (strain MJ11) (Vibrio fischeri)).